A 366-amino-acid chain; its full sequence is Transcription factor bHLH74 (366 aa).

Over residues 1–11 (MGGESNEGGEM) the composition is skewed to gly residues. Disordered stretches follow at residues 1-20 (MGGE…DDES) and 123-201 (GESS…APKE). 2 stretches are compositionally biased toward basic and acidic residues: residues 123–134 (GESSHEDHHQVS) and 159–170 (KAVEEFQEDPQR). The region spanning 212–262 (QATNSHSLAERVRREKISERMRLLQELVPGCNKITGKAVMLDEIINYVQSL) is the bHLH domain.

Homodimer. Interacts with IBH1. Binds reversibly to CRY2 after blue light illumination. Expressed constitutively in roots, leaves, stems, and flowers.

It localises to the nucleus. Transcriptional activator involved in cell elongation. Regulates the expression of a subset of genes involved in cell expansion by binding to the G-box motif. Binds to chromatin DNA of the FT gene and promotes its expression, and thus triggers flowering in response to blue light. This is Transcription factor bHLH74 (BHLH74) from Arabidopsis thaliana (Mouse-ear cress).